The following is a 412-amino-acid chain: Polyferredoxin protein MvhB (412 aa).

4Fe-4S ferredoxin-type domains are found at residues 1-29 (MIVVNKEDCIRCGACQGTCPTAAIEVTPE), 30-57 (DVIYCDICGGEPKCVDACPTGALKIEDL), 67-96 (GRIVFNPDKCNECGDCVEVCPPQILKLDEG), 97-127 (KVKKIPLQGFCVMCQKCVDICPVGVIGVEGI), 138-166 (EGPIFIADCVGCGMCVPECPVDAITLEKV), 168-197 (GVIEIDEDTCIKCGVCAQTCPWNAVYISGK), 207-236 (RKFELDEEACIGCNTCVEACPGDFIVPKSS), 238-266 (LTVELPAICTACGLCEQLCPVDAIDLDVE), 276-305 (EGLVWDEGKCDFIGACANICPNDAIRVVTR), 314-345 (EKVDEEPSFAMCTRCGACTMACPKGALSLVDM), 357-386 (KRVQYNPALCDQCGDCIEACPYDMLKLTDE), and 385-412 (DEKVPLKGFCILCDQCIPACPKGALSLK). 4 residues coordinate [4Fe-4S] cluster: cysteine 9, cysteine 12, cysteine 15, and cysteine 19. Residues cysteine 76, cysteine 79, cysteine 82, cysteine 86, cysteine 107, cysteine 110, cysteine 113, cysteine 117, cysteine 146, cysteine 149, cysteine 152, cysteine 156, cysteine 177, cysteine 180, cysteine 183, cysteine 187, cysteine 216, cysteine 219, cysteine 222, cysteine 226, cysteine 246, cysteine 249, cysteine 252, and cysteine 256 each coordinate [4Fe-4S] cluster. Positions 325, 328, 331, 335, 366, 369, 372, 376, 394, 397, 400, and 404 each coordinate [4Fe-4S] cluster.

Requires [4Fe-4S] cluster as cofactor.

This is Polyferredoxin protein MvhB (mvhB) from Methanothermobacter marburgensis (strain ATCC BAA-927 / DSM 2133 / JCM 14651 / NBRC 100331 / OCM 82 / Marburg) (Methanobacterium thermoautotrophicum).